Here is a 185-residue protein sequence, read N- to C-terminus: Large ribosomal subunit protein uL10 (185 aa).

A disordered region spans residues 165 to 185; the sequence is LRAKKEEQGGAGTPAPAEAAE.

It belongs to the universal ribosomal protein uL10 family. As to quaternary structure, part of the ribosomal stalk of the 50S ribosomal subunit. The N-terminus interacts with L11 and the large rRNA to form the base of the stalk. The C-terminus forms an elongated spine to which L12 dimers bind in a sequential fashion forming a multimeric L10(L12)X complex.

Its function is as follows. Forms part of the ribosomal stalk, playing a central role in the interaction of the ribosome with GTP-bound translation factors. The chain is Large ribosomal subunit protein uL10 from Streptomyces griseus subsp. griseus (strain JCM 4626 / CBS 651.72 / NBRC 13350 / KCC S-0626 / ISP 5235).